A 352-amino-acid chain; its full sequence is Holliday junction branch migration complex subunit RuvB (352 aa).

The tract at residues 1-42 (MAIVSSSAGRADSQPPAAKSRVVDASPLPEEASPAREDGLRP) is disordered. Residues 13–201 (SQPPAAKSRV…FGLIQRLEFY (189 aa)) are large ATPase domain (RuvB-L). The span at 33-42 (SPAREDGLRP) shows a compositional bias: basic and acidic residues. ATP contacts are provided by leucine 40, arginine 41, glycine 82, lysine 85, threonine 86, threonine 87, arginine 191, tyrosine 201, and arginine 238. Position 86 (threonine 86) interacts with Mg(2+). The segment at 202-273 (GLEDLQAIVE…LVDEALTLHR (72 aa)) is small ATPAse domain (RuvB-S). The interval 276–352 (ARGLDASDRR…RRHLGWPELP (77 aa)) is head domain (RuvB-H). Residues arginine 331 and arginine 336 each contribute to the DNA site.

The protein belongs to the RuvB family. In terms of assembly, homohexamer. Forms an RuvA(8)-RuvB(12)-Holliday junction (HJ) complex. HJ DNA is sandwiched between 2 RuvA tetramers; dsDNA enters through RuvA and exits via RuvB. An RuvB hexamer assembles on each DNA strand where it exits the tetramer. Each RuvB hexamer is contacted by two RuvA subunits (via domain III) on 2 adjacent RuvB subunits; this complex drives branch migration. In the full resolvosome a probable DNA-RuvA(4)-RuvB(12)-RuvC(2) complex forms which resolves the HJ.

Its subcellular location is the cytoplasm. The catalysed reaction is ATP + H2O = ADP + phosphate + H(+). The RuvA-RuvB-RuvC complex processes Holliday junction (HJ) DNA during genetic recombination and DNA repair, while the RuvA-RuvB complex plays an important role in the rescue of blocked DNA replication forks via replication fork reversal (RFR). RuvA specifically binds to HJ cruciform DNA, conferring on it an open structure. The RuvB hexamer acts as an ATP-dependent pump, pulling dsDNA into and through the RuvAB complex. RuvB forms 2 homohexamers on either side of HJ DNA bound by 1 or 2 RuvA tetramers; 4 subunits per hexamer contact DNA at a time. Coordinated motions by a converter formed by DNA-disengaged RuvB subunits stimulates ATP hydrolysis and nucleotide exchange. Immobilization of the converter enables RuvB to convert the ATP-contained energy into a lever motion, pulling 2 nucleotides of DNA out of the RuvA tetramer per ATP hydrolyzed, thus driving DNA branch migration. The RuvB motors rotate together with the DNA substrate, which together with the progressing nucleotide cycle form the mechanistic basis for DNA recombination by continuous HJ branch migration. Branch migration allows RuvC to scan DNA until it finds its consensus sequence, where it cleaves and resolves cruciform DNA. In Prochlorococcus marinus (strain MIT 9313), this protein is Holliday junction branch migration complex subunit RuvB.